Reading from the N-terminus, the 144-residue chain is MCHAREASLGTGEPEAAPRDNFPREAGSKRGIGAAFETRAQRFLERAGLALVARNVTVRGGEIDLVMRERDGTLVFVEVRARANSRYGGAAASIGVRKRMRLLLAAHAFWARTGGANACRFDVVAFEGGRLVWLRDAFRADDAG.

The disordered stretch occupies residues Met-1–Ser-28. The segment covering Ala-16 to Ser-28 has biased composition (basic and acidic residues).

Belongs to the UPF0102 family.

This Burkholderia pseudomallei (strain 668) protein is UPF0102 protein BURPS668_3819.